Consider the following 188-residue polypeptide: Phosphatidylinositol N-acetylglucosaminyltransferase subunit H (188 aa).

The protein belongs to the PIGH family. As to quaternary structure, component of the glycosylphosphatidylinositol-N-acetylglucosaminyltransferase (GPI-GnT) complex composed at least by PIGA, PIGC, PIGH, PIGP, PIGQ, PIGY and DPM2. Interacts with PIGQ.

The protein localises to the cytoplasm. The protein operates within glycolipid biosynthesis; glycosylphosphatidylinositol-anchor biosynthesis. Functionally, part of the glycosylphosphatidylinositol-N-acetylglucosaminyltransferase (GPI-GnT) complex that catalyzes the transfer of N-acetylglucosamine from UDP-N-acetylglucosamine to phosphatidylinositol and participates in the first step of GPI biosynthesis. This Homo sapiens (Human) protein is Phosphatidylinositol N-acetylglucosaminyltransferase subunit H.